Here is a 97-residue protein sequence, read N- to C-terminus: Exodeoxyribonuclease 7 small subunit (97 aa).

The tract at residues 1–22 is disordered; it reads MAKTASPGDTAAGNGTEPLPDK.

The protein belongs to the XseB family. Heterooligomer composed of large and small subunits.

It localises to the cytoplasm. The catalysed reaction is Exonucleolytic cleavage in either 5'- to 3'- or 3'- to 5'-direction to yield nucleoside 5'-phosphates.. In terms of biological role, bidirectionally degrades single-stranded DNA into large acid-insoluble oligonucleotides, which are then degraded further into small acid-soluble oligonucleotides. In Burkholderia vietnamiensis (strain G4 / LMG 22486) (Burkholderia cepacia (strain R1808)), this protein is Exodeoxyribonuclease 7 small subunit.